The primary structure comprises 133 residues: MSVNDPIGDMLTRIRNACMARHTTVTMPASKMKIAIADILKREGFIRDYTVIDDGKPYKTISITLKYMPDRRPAITGLRRVSKPGLRVYTKRADIPRVRGGLGLSILSTPKGVLADHEAWRARVGGEVLCYVW.

It belongs to the universal ribosomal protein uS8 family. Part of the 30S ribosomal subunit. Contacts proteins S5 and S12.

Functionally, one of the primary rRNA binding proteins, it binds directly to 16S rRNA central domain where it helps coordinate assembly of the platform of the 30S subunit. The sequence is that of Small ribosomal subunit protein uS8 from Chloroflexus aggregans (strain MD-66 / DSM 9485).